The chain runs to 296 residues: Probable AP endonuclease (296 aa).

A disulfide bridge connects residues Cys-16 and Cys-20. Zn(2+) is bound by residues His-78, His-115, Glu-142, His-182, His-218, Asp-231, His-233, and Glu-271.

It belongs to the AP endonuclease 2 family. It depends on Zn(2+) as a cofactor.

Its subcellular location is the host nucleus. The protein resides in the host cytoplasm. It is found in the virion. Endonuclease that plays a role in DNA repair. Cleaves phosphodiester bonds on the 5' side of apurinic or apyrimidinic sites (AP sites). In addition to endonuclease activity, the ASFV enzyme has a proofreading 3'-5' exonuclease activity that is considerably more efficient in the elimination of a mismatch than in that of a correctly paired base. Displays 3'-phosphatase and 3'-repair diesterase activities. The single nucleotide gaps generated by the AP endonuclease are filled by the viral AP endonuclease and DNA ligase. This is Probable AP endonuclease from Ornithodoros (relapsing fever ticks).